A 364-amino-acid chain; its full sequence is Fructose-bisphosphate aldolase B (364 aa).

Ala2 carries the N-acetylalanine modification. At Lys13 the chain carries N6-succinyllysine. Ser36 is modified (phosphoserine). Thr39 is subject to Phosphothreonine. A beta-D-fructose 1,6-bisphosphate-binding site is contributed by Arg43. Ser89 carries the phosphoserine modification. The residue at position 119 (Thr119) is a Phosphothreonine. Residue Lys121 is modified to N6-succinyllysine. At Ser132 the chain carries Phosphoserine. Glu188 functions as the Proton acceptor in the catalytic mechanism. Lys230 acts as the Schiff-base intermediate with dihydroxyacetone-P in catalysis. Ser272, Ser276, Ser299, and Ser301 each carry phosphoserine. 272–274 contacts beta-D-fructose 1,6-bisphosphate; the sequence is SGG. Arg304 is a binding site for beta-D-fructose 1,6-bisphosphate. A Phosphoserine modification is found at Ser309. The residue at position 317 (Lys317) is an N6-succinyllysine.

Belongs to the class I fructose-bisphosphate aldolase family. Homotetramer. Interacts with BBS1, BBS2, BBS4 and BBS7. Forms a ternary complex with G6PD and TP53; this interaction is direct.

The protein localises to the cytoplasm. The protein resides in the cytosol. It localises to the cytoskeleton. Its subcellular location is the microtubule organizing center. It is found in the centrosome. The protein localises to the centriolar satellite. The catalysed reaction is beta-D-fructose 1,6-bisphosphate = D-glyceraldehyde 3-phosphate + dihydroxyacetone phosphate. It catalyses the reaction beta-D-fructose 1-phosphate = D-glyceraldehyde + dihydroxyacetone phosphate. The protein operates within carbohydrate degradation; glycolysis; D-glyceraldehyde 3-phosphate and glycerone phosphate from D-glucose: step 4/4. Its pathway is carbohydrate biosynthesis; gluconeogenesis. It participates in carbohydrate metabolism; fructose metabolism. Catalyzes the aldol cleavage of fructose 1,6-biphosphate to form two triosephosphates dihydroxyacetone phosphate and D-glyceraldehyde 3-phosphate in glycolysis as well as the reverse stereospecific aldol addition reaction in gluconeogenesis. In fructolysis, metabolizes fructose 1-phosphate derived from the phosphorylation of dietary fructose by fructokinase into dihydroxyacetone phosphate and D-glyceraldehyde. Acts as an adapter independently of its enzymatic activity, exerts a tumor suppressor role by stabilizing the ternary complex with G6PD and TP53 to inhibit G6PD activity and keep oxidative pentose phosphate metabolism in check. This chain is Fructose-bisphosphate aldolase B, found in Homo sapiens (Human).